Consider the following 115-residue polypeptide: MRVKTGPTTRRRRKSWLKKAEGAWGINSTSYRNAKQTVMQASKYAYRDRKNKKRDFRKLWIARINAAIRKENYTYSAFMHKLKQKEIAINRKMLSELAIQNPEEFKKFVHSVMLK.

Belongs to the bacterial ribosomal protein bL20 family.

Binds directly to 23S ribosomal RNA and is necessary for the in vitro assembly process of the 50S ribosomal subunit. It is not involved in the protein synthesizing functions of that subunit. The sequence is that of Large ribosomal subunit protein bL20 from Malacoplasma penetrans (strain HF-2) (Mycoplasma penetrans).